A 247-amino-acid chain; its full sequence is 5'-nucleotidase SurE (247 aa).

A divalent metal cation is bound by residues Asp-8, Asp-9, Ser-39, and Asn-91.

Belongs to the SurE nucleotidase family. The cofactor is a divalent metal cation.

It localises to the cytoplasm. It catalyses the reaction a ribonucleoside 5'-phosphate + H2O = a ribonucleoside + phosphate. Its function is as follows. Nucleotidase that shows phosphatase activity on nucleoside 5'-monophosphates. This is 5'-nucleotidase SurE from Ruthia magnifica subsp. Calyptogena magnifica.